The chain runs to 193 residues: Holliday junction branch migration complex subunit RuvA (193 aa).

The domain I stretch occupies residues 1 to 64 (MIGRIAGTLI…EDAHLLYGFG (64 aa)). A domain II region spans residues 65–143 (SAAERNTFRE…AELGHAPGAA (79 aa)). The flexible linker stretch occupies residues 144–151 (PVHDSAVD). Residues 151 to 193 (DILNALLALGYSEKEAATAIKQVPAGTGVSDGIKLALKALSKA) are domain III.

Belongs to the RuvA family. Homotetramer. Forms an RuvA(8)-RuvB(12)-Holliday junction (HJ) complex. HJ DNA is sandwiched between 2 RuvA tetramers; dsDNA enters through RuvA and exits via RuvB. An RuvB hexamer assembles on each DNA strand where it exits the tetramer. Each RuvB hexamer is contacted by two RuvA subunits (via domain III) on 2 adjacent RuvB subunits; this complex drives branch migration. In the full resolvosome a probable DNA-RuvA(4)-RuvB(12)-RuvC(2) complex forms which resolves the HJ.

It is found in the cytoplasm. Its function is as follows. The RuvA-RuvB-RuvC complex processes Holliday junction (HJ) DNA during genetic recombination and DNA repair, while the RuvA-RuvB complex plays an important role in the rescue of blocked DNA replication forks via replication fork reversal (RFR). RuvA specifically binds to HJ cruciform DNA, conferring on it an open structure. The RuvB hexamer acts as an ATP-dependent pump, pulling dsDNA into and through the RuvAB complex. HJ branch migration allows RuvC to scan DNA until it finds its consensus sequence, where it cleaves and resolves the cruciform DNA. The sequence is that of Holliday junction branch migration complex subunit RuvA from Cupriavidus pinatubonensis (strain JMP 134 / LMG 1197) (Cupriavidus necator (strain JMP 134)).